The chain runs to 489 residues: N-succinylglutamate 5-semialdehyde dehydrogenase 1 (489 aa).

NAD(+) is bound at residue 223 to 228 (GSSRTG). Active-site residues include E246 and C280.

Belongs to the aldehyde dehydrogenase family. AstD subfamily.

The catalysed reaction is N-succinyl-L-glutamate 5-semialdehyde + NAD(+) + H2O = N-succinyl-L-glutamate + NADH + 2 H(+). Its pathway is amino-acid degradation; L-arginine degradation via AST pathway; L-glutamate and succinate from L-arginine: step 4/5. In terms of biological role, catalyzes the NAD-dependent reduction of succinylglutamate semialdehyde into succinylglutamate. This Pseudoalteromonas translucida (strain TAC 125) protein is N-succinylglutamate 5-semialdehyde dehydrogenase 1.